A 590-amino-acid polypeptide reads, in one-letter code: L-fucose isomerase (590 aa).

Residues glutamate 337 and aspartate 361 each act as proton acceptor in the active site. 3 residues coordinate Mn(2+): glutamate 337, aspartate 361, and histidine 528.

Belongs to the L-fucose isomerase family. It depends on Mn(2+) as a cofactor.

It is found in the cytoplasm. It catalyses the reaction L-fucose = L-fuculose. It functions in the pathway carbohydrate degradation; L-fucose degradation; L-lactaldehyde and glycerone phosphate from L-fucose: step 1/3. In terms of biological role, converts the aldose L-fucose into the corresponding ketose L-fuculose. This is L-fucose isomerase from Bacteroides fragilis (strain YCH46).